The chain runs to 259 residues: DNA adenine methylase (259 aa).

S-adenosyl-L-methionine is bound by residues Tyr7, Lys11, Asp50, and Asp171.

Belongs to the N(4)/N(6)-methyltransferase family. Monomer.

It carries out the reaction a 2'-deoxyadenosine in DNA + S-adenosyl-L-methionine = an N(6)-methyl-2'-deoxyadenosine in DNA + S-adenosyl-L-homocysteine + H(+). An alpha subtpe methyltransferase that recognizes the double-stranded sequence 5'-GATC-3' and methylates A-2 on both strands. May prevent degradation of viral DNA by the host restriction-modification antiviral defense system. This is DNA adenine methylase from Enterobacteria phage T2 (Bacteriophage T2).